Consider the following 102-residue polypeptide: Putative pterin-4-alpha-carbinolamine dehydratase (102 aa).

The protein belongs to the pterin-4-alpha-carbinolamine dehydratase family.

It carries out the reaction (4aS,6R)-4a-hydroxy-L-erythro-5,6,7,8-tetrahydrobiopterin = (6R)-L-erythro-6,7-dihydrobiopterin + H2O. This Burkholderia orbicola (strain MC0-3) protein is Putative pterin-4-alpha-carbinolamine dehydratase.